Reading from the N-terminus, the 913-residue chain is Proline and serine-rich protein 1 (913 aa).

Met-1 is modified (N-acetylmethionine). Disordered stretches follow at residues 233-291 (VPPP…PAVS), 488-507 (ASLS…ATNK), 592-618 (SEPT…TLGL), and 888-913 (DGFP…SGWQ). The segment covering 251–275 (LSSQSKPTQSQTFSTPASQLFSPHG) has biased composition (polar residues). Positions 276-291 (SSNPSTPAATPVPAVS) are enriched in low complexity. A compositionally biased stretch (polar residues) spans 488–506 (ASLSSLPNRNSDSPASATN). Residues 893 to 913 (YPSTPGTPFSLQTGLSQSGWQ) show a composition bias toward polar residues.

As to quaternary structure, interacts with TET2 and OGT; this interaction mediates TET2 O-GlcNAcylation and stability by promoting the interaction between OGT and TET2. Interacts with KDM6A. Interacts with TET1. Glycosylated. Interaction with OGT leads to GlcNAcylation.

In terms of biological role, mediates OGT interaction with and O-GlcNAcylation of TET2 to control TET2 stabilization at enhancers and CpG islands (CGIs). The chain is Proline and serine-rich protein 1 from Mus musculus (Mouse).